The sequence spans 169 residues: Putative phosphoesterase SAR0985 (169 aa).

Residue His-34 is the Proton donor of the active site. 2 consecutive short sequence motifs (HXTX) follow at residues 34–37 (HVTI) and 115–118 (HFTI). The active-site Proton acceptor is the His-115.

This sequence belongs to the 2H phosphoesterase superfamily. YjcG family.

In Staphylococcus aureus (strain MRSA252), this protein is Putative phosphoesterase SAR0985.